A 332-amino-acid chain; its full sequence is 4-hydroxy-3-methylbut-2-enyl diphosphate reductase (332 aa).

Cys-34 contacts [4Fe-4S] cluster. His-63 and His-96 together coordinate (2E)-4-hydroxy-3-methylbut-2-enyl diphosphate. 2 residues coordinate dimethylallyl diphosphate: His-63 and His-96. Positions 63 and 96 each coordinate isopentenyl diphosphate. A [4Fe-4S] cluster-binding site is contributed by Cys-118. His-146 is a (2E)-4-hydroxy-3-methylbut-2-enyl diphosphate binding site. Residue His-146 participates in dimethylallyl diphosphate binding. An isopentenyl diphosphate-binding site is contributed by His-146. The Proton donor role is filled by Glu-148. Thr-186 serves as a coordination point for (2E)-4-hydroxy-3-methylbut-2-enyl diphosphate. A [4Fe-4S] cluster-binding site is contributed by Cys-216. (2E)-4-hydroxy-3-methylbut-2-enyl diphosphate-binding residues include Ser-244, Ser-245, Asn-246, and Ser-289. Residues Ser-244, Ser-245, Asn-246, and Ser-289 each contribute to the dimethylallyl diphosphate site. 4 residues coordinate isopentenyl diphosphate: Ser-244, Ser-245, Asn-246, and Ser-289.

The protein belongs to the IspH family. [4Fe-4S] cluster is required as a cofactor.

It carries out the reaction isopentenyl diphosphate + 2 oxidized [2Fe-2S]-[ferredoxin] + H2O = (2E)-4-hydroxy-3-methylbut-2-enyl diphosphate + 2 reduced [2Fe-2S]-[ferredoxin] + 2 H(+). The enzyme catalyses dimethylallyl diphosphate + 2 oxidized [2Fe-2S]-[ferredoxin] + H2O = (2E)-4-hydroxy-3-methylbut-2-enyl diphosphate + 2 reduced [2Fe-2S]-[ferredoxin] + 2 H(+). Its pathway is isoprenoid biosynthesis; dimethylallyl diphosphate biosynthesis; dimethylallyl diphosphate from (2E)-4-hydroxy-3-methylbutenyl diphosphate: step 1/1. It participates in isoprenoid biosynthesis; isopentenyl diphosphate biosynthesis via DXP pathway; isopentenyl diphosphate from 1-deoxy-D-xylulose 5-phosphate: step 6/6. Its function is as follows. Catalyzes the conversion of 1-hydroxy-2-methyl-2-(E)-butenyl 4-diphosphate (HMBPP) into a mixture of isopentenyl diphosphate (IPP) and dimethylallyl diphosphate (DMAPP). Acts in the terminal step of the DOXP/MEP pathway for isoprenoid precursor biosynthesis. The polypeptide is 4-hydroxy-3-methylbut-2-enyl diphosphate reductase (Mycobacterium leprae (strain TN)).